The following is a 96-amino-acid chain: Co-chaperonin GroES (96 aa).

The protein belongs to the GroES chaperonin family. In terms of assembly, heptamer of 7 subunits arranged in a ring. Interacts with the chaperonin GroEL.

Its subcellular location is the cytoplasm. In terms of biological role, together with the chaperonin GroEL, plays an essential role in assisting protein folding. The GroEL-GroES system forms a nano-cage that allows encapsulation of the non-native substrate proteins and provides a physical environment optimized to promote and accelerate protein folding. GroES binds to the apical surface of the GroEL ring, thereby capping the opening of the GroEL channel. This is Co-chaperonin GroES from Histophilus somni (strain 129Pt) (Haemophilus somnus).